The sequence spans 601 residues: MEGADLLTAGVLFLFAAVAAVPLAARLGIGAVLGYLLAGIAIGPWGLGFISDVDEILHFSELGVVFLMFIIGLELNPSRLWQLRRSIFGVGAAQVLLSAAVLAGLLMLADFLWQAAVVGGIGLAMSSTAMALQLMREKGMNRSESGQLGFSVLLFQDLAVIPALALVPLLAGSADEHFDWFKVAMKVLAFAVMLIGGRYLLRPVFRFIAASGVREVFTAATLLLVLSAALFMDALGLSMALGTFIAGVLLAESEYRHELENAIDPFKGLLLGLFFISVGMSLNLGVLYTHLLWVAASVVILVVIKMLTLYLLARLYGIRSSERMQFASVLSQGGEFAFVLFSTASSQRLFQGDQMALLLVTVTLSMMTTPLLMKGIDKWLSRRLNGPEENDEKPWVEDDKPQVIVVGFGRFGQVIARLLMANKMRITVLERDIGAVNLMRKYGYKVYYGDATQVELLRSAGAEAAESIVITCNEPEDTMKLVELCQQHFPHLHILARARGRVEAHELLQAGVTQFSRETFSSALELGRKTLVSLGMHPHQAQRAQLHFRRLDMRMLRELIPEHSDMVQISRAREARRELEEIFQREMQQERRQLDGWDEFE.

13 helical membrane passes run 4–24 (ADLL…VPLA), 29–49 (IGAV…GLGF), 55–75 (EILH…GLEL), 87–107 (IFGV…GLLM), 111–131 (FLWQ…TAMA), 152–172 (VLLF…LLAG), 177–197 (HFDW…LIGG), 207–227 (FIAA…LVLS), 230–250 (LFMD…GVLL), 262–282 (AIDP…GMSL), 284–304 (LGVL…LVVI), 324–344 (MQFA…FSTA), and 356–376 (ALLL…MKGI). An RCK N-terminal domain is found at 400-519 (KPQVIVVGFG…AGVTQFSRET (120 aa)).

Belongs to the monovalent cation:proton antiporter 2 (CPA2) transporter (TC 2.A.37) family. KefB subfamily. Interacts with the regulatory subunit KefG.

The protein localises to the cell inner membrane. In terms of biological role, pore-forming subunit of a potassium efflux system that confers protection against electrophiles. Catalyzes K(+)/H(+) antiport. This Salmonella enteritidis PT4 (strain P125109) protein is Glutathione-regulated potassium-efflux system protein KefB.